The primary structure comprises 1643 residues: Neurexin-3 (1643 aa).

The signal sequence occupies residues 1–27 (MSSTLHSVFFTLKVSILLGSLLGLCLG). The 175-residue stretch at 28-202 (LEFMGLPNQW…GVQMDAEGPC (175 aa)) folds into the Laminin G-like 1 domain. At 28-1568 (LEFMGLPNQW…EVIRESSSTT (1541 aa)) the chain is on the extracellular side. Asn58 and Asn105 each carry an N-linked (GlcNAc...) asparagine glycan. In terms of domain architecture, EGF-like 1 spans 198 to 235 (AEGPCGERPCENGGICFLLDGHPTCDCSTTGYGGKLCS). 3 disulfide bridges follow: Cys202/Cys213, Cys207/Cys222, and Cys224/Cys234. 2 Laminin G-like domains span residues 258–440 (VATF…VFKC) and 447–639 (DPIN…KSSC). 3 residues coordinate Ca(2+): Asp304, Leu321, and Met374. Intrachain disulfides connect Cys404/Cys440, Cys610/Cys639, Cys647/Cys658, Cys652/Cys667, and Cys669/Cys679. The region spanning 643-680 (SAKQCDSYPCKNNAVCKDGWNRFICDCTGTGYWGRTCE) is the EGF-like 2 domain. Laminin G-like domains follow at residues 685–857 (ILSY…IDYC) and 871–1046 (DPVT…ERGC). Ca(2+) contacts are provided by Asp732 and Leu749. Asn757 carries N-linked (GlcNAc...) asparagine glycosylation. Arg807 serves as a coordination point for Ca(2+). 4 disulfides stabilise this stretch: Cys1018-Cys1046, Cys1053-Cys1064, Cys1058-Cys1073, and Cys1075-Cys1085. An EGF-like 3 domain is found at 1049-1086 (PSTTCQEDSCANQGVCMQQWEGFTCDCSMTSYSGNQCN). The 171-residue stretch at 1090 to 1260 (ATYIFGKSGG…NPNIKINGSV (171 aa)) folds into the Laminin G-like 6 domain. Residues Asp1142 and Ile1159 each coordinate Ca(2+). Asn1189 is a glycosylation site (N-linked (GlcNAc...) asparagine). Residues Ile1211 and Asn1213 each coordinate Ca(2+). Asn1257 and Asn1301 each carry an N-linked (GlcNAc...) asparagine glycan. Residues 1294–1318 (ATTTTRKNRSTASIQPTSDDLVSSA) are disordered. Over residues 1303–1318 (STASIQPTSDDLVSSA) the composition is skewed to polar residues. Residue Ser1317 is glycosylated (O-linked (Xyl...) (heparan sulfate) serine). The helical transmembrane segment at 1569 to 1589 (GMVVGIVAAAALCILILLYAM) threads the bilayer. At 1590-1643 (YKYRNRDEGSYQVDETRNYISNSAQSNGTLMKEKQQSSKSGHKKQKNKDREYYV) the chain is on the cytoplasmic side. The disordered stretch occupies residues 1611 to 1643 (NSAQSNGTLMKEKQQSSKSGHKKQKNKDREYYV).

It belongs to the neurexin family. The laminin G-like domain 2 binds to NXPH1. Specific isoforms bind to alpha-dystroglycan. The cytoplasmic C-terminal region binds to CASK. Specific isoforms bind neuroligins NLGN1, NLGN2 and NLGN3. Interacts with CLSTN3. O-glycosylated; contains heparan sulfate. Heparan sulfate attachment is required for synapse development by mediating interactions with neuroligins. Expressed in the blood vessel walls (at protein level). Highly expressed in brain, lung, and pancreas; a lower level of expression is detectable in heart, placenta, liver, and kidney, whereas no expression can be observed in skeletal muscle. Isoform 4a is heart-specific.

It localises to the presynaptic cell membrane. Neuronal cell surface protein that may be involved in cell recognition and cell adhesion. May mediate intracellular signaling. This is Neurexin-3 (NRXN3) from Homo sapiens (Human).